The following is a 147-amino-acid chain: Hemoglobin subunit rho (147 aa).

In terms of domain architecture, Globin spans 3–147 (HWSAEEKQLI…VAHALAYKYH (145 aa)). Heme b is bound by residues H64 and H93.

It belongs to the globin family.

Functionally, the rho chain is the major early embryonic beta-type hemoglobin chain. The chain is Hemoglobin subunit rho from Gallus gallus (Chicken).